The primary structure comprises 233 residues: MNHLNKLMERLGHQFNNLELLKIALTHRSSGADNNERLEFLGDSVLGFIIASELYQRRPQAREGDLSRMRASMVNGDELAQMSTKLGINEYLQLGVGEQKSGGKRRRSILADALEAIVGSIYIDAGLETCRRCVLNWYGERVDDLSKLSPKKDAKSLLQEWLQARRLPLPTYEVKITGEAHAQTFTVNCYVKGLPHKTEGVNTTRRRAEQIAAKRFLELLDDGKGDGITERDQ.

In terms of domain architecture, RNase III spans 4–126 (LNKLMERLGH…IVGSIYIDAG (123 aa)). Mg(2+) is bound at residue glutamate 39. Residue aspartate 43 is part of the active site. Aspartate 112 and glutamate 115 together coordinate Mg(2+). The active site involves glutamate 115. Positions 153 to 222 (DAKSLLQEWL…AKRFLELLDD (70 aa)) constitute a DRBM domain.

This sequence belongs to the ribonuclease III family. In terms of assembly, homodimer. It depends on Mg(2+) as a cofactor.

The protein resides in the cytoplasm. It carries out the reaction Endonucleolytic cleavage to 5'-phosphomonoester.. Its function is as follows. Digests double-stranded RNA. Involved in the processing of primary rRNA transcript to yield the immediate precursors to the large and small rRNAs (23S and 16S). Processes some mRNAs, and tRNAs when they are encoded in the rRNA operon. Processes pre-crRNA and tracrRNA of type II CRISPR loci if present in the organism. The polypeptide is Ribonuclease 3 (Coxiella burnetii (strain CbuG_Q212) (Coxiella burnetii (strain Q212))).